A 432-amino-acid chain; its full sequence is Adenylosuccinate synthetase (432 aa).

GTP is bound by residues 12 to 18 and 40 to 42; these read GDEGKGK and GHT. The active-site Proton acceptor is aspartate 13. Residues aspartate 13 and glycine 40 each coordinate Mg(2+). Residues 13-16, 38-41, threonine 129, arginine 143, glutamine 224, threonine 239, and arginine 303 contribute to the IMP site; these read DEGK and NAGH. Residue histidine 41 is the Proton donor of the active site. 299-305 serves as a coordination point for substrate; sequence VTTGRRR. GTP-binding positions include arginine 305, 331 to 333, and 413 to 415; these read KLD and GVG.

The protein belongs to the adenylosuccinate synthetase family. In terms of assembly, homodimer. Mg(2+) serves as cofactor.

It localises to the cytoplasm. The enzyme catalyses IMP + L-aspartate + GTP = N(6)-(1,2-dicarboxyethyl)-AMP + GDP + phosphate + 2 H(+). It functions in the pathway purine metabolism; AMP biosynthesis via de novo pathway; AMP from IMP: step 1/2. Plays an important role in the de novo pathway of purine nucleotide biosynthesis. Catalyzes the first committed step in the biosynthesis of AMP from IMP. This Mycobacterium tuberculosis (strain CDC 1551 / Oshkosh) protein is Adenylosuccinate synthetase.